A 477-amino-acid polypeptide reads, in one-letter code: Sucrose-6-phosphate hydrolase (477 aa).

Substrate is bound by residues 36-39 (WMND), Gln55, Trp63, 98-99 (FS), 160-161 (RD), Glu215, and Trp298. The active site involves Asp39.

This sequence belongs to the glycosyl hydrolase 32 family.

The protein localises to the cytoplasm. It carries out the reaction Hydrolysis of terminal non-reducing beta-D-fructofuranoside residues in beta-D-fructofuranosides.. The protein operates within glycan biosynthesis; sucrose metabolism. Functionally, enables the bacterium to metabolize sucrose as a sole carbon source. The sequence is that of Sucrose-6-phosphate hydrolase (cscA) from Escherichia coli.